The chain runs to 200 residues: dITP/XTP pyrophosphatase (200 aa).

8–13 (TGNQGK) is a substrate binding site. The active-site Proton acceptor is the Asp69. Asp69 contacts Mg(2+). Residues Ser70, 154 to 157 (FGYD), Lys177, and 182 to 183 (HR) each bind substrate.

This sequence belongs to the HAM1 NTPase family. In terms of assembly, homodimer. Mg(2+) is required as a cofactor.

It catalyses the reaction XTP + H2O = XMP + diphosphate + H(+). The enzyme catalyses dITP + H2O = dIMP + diphosphate + H(+). The catalysed reaction is ITP + H2O = IMP + diphosphate + H(+). In terms of biological role, pyrophosphatase that catalyzes the hydrolysis of nucleoside triphosphates to their monophosphate derivatives, with a high preference for the non-canonical purine nucleotides XTP (xanthosine triphosphate), dITP (deoxyinosine triphosphate) and ITP. Seems to function as a house-cleaning enzyme that removes non-canonical purine nucleotides from the nucleotide pool, thus preventing their incorporation into DNA/RNA and avoiding chromosomal lesions. This chain is dITP/XTP pyrophosphatase, found in Vibrio cholerae serotype O1 (strain ATCC 39315 / El Tor Inaba N16961).